The chain runs to 281 residues: Tryptophan synthase alpha chain (281 aa).

Catalysis depends on proton acceptor residues glutamate 49 and aspartate 60.

Belongs to the TrpA family. As to quaternary structure, tetramer of two alpha and two beta chains.

It catalyses the reaction (1S,2R)-1-C-(indol-3-yl)glycerol 3-phosphate + L-serine = D-glyceraldehyde 3-phosphate + L-tryptophan + H2O. It participates in amino-acid biosynthesis; L-tryptophan biosynthesis; L-tryptophan from chorismate: step 5/5. Its function is as follows. The alpha subunit is responsible for the aldol cleavage of indoleglycerol phosphate to indole and glyceraldehyde 3-phosphate. The chain is Tryptophan synthase alpha chain from Methanocaldococcus jannaschii (strain ATCC 43067 / DSM 2661 / JAL-1 / JCM 10045 / NBRC 100440) (Methanococcus jannaschii).